A 70-amino-acid chain; its full sequence is NAD(P)H-quinone oxidoreductase subunit O (70 aa).

Belongs to the complex I NdhO subunit family. As to quaternary structure, NDH-1 can be composed of about 15 different subunits; different subcomplexes with different compositions have been identified which probably have different functions.

The protein localises to the cellular thylakoid membrane. It carries out the reaction a plastoquinone + NADH + (n+1) H(+)(in) = a plastoquinol + NAD(+) + n H(+)(out). The enzyme catalyses a plastoquinone + NADPH + (n+1) H(+)(in) = a plastoquinol + NADP(+) + n H(+)(out). In terms of biological role, NDH-1 shuttles electrons from an unknown electron donor, via FMN and iron-sulfur (Fe-S) centers, to quinones in the respiratory and/or the photosynthetic chain. The immediate electron acceptor for the enzyme in this species is believed to be plastoquinone. Couples the redox reaction to proton translocation, and thus conserves the redox energy in a proton gradient. Cyanobacterial NDH-1 also plays a role in inorganic carbon-concentration. The polypeptide is NAD(P)H-quinone oxidoreductase subunit O (Trichormus variabilis (strain ATCC 29413 / PCC 7937) (Anabaena variabilis)).